Consider the following 234-residue polypeptide: Ubiquitin carboxyl-terminal hydrolase 3 (234 aa).

The 221-residue stretch at 12–232 (RWLPLESNPD…LNFNLIAISK (221 aa)) folds into the UCH catalytic domain. The Nucleophile role is filled by Cys-101. His-172 (proton donor) is an active-site residue.

It belongs to the peptidase C12 family.

It carries out the reaction Thiol-dependent hydrolysis of ester, thioester, amide, peptide and isopeptide bonds formed by the C-terminal Gly of ubiquitin (a 76-residue protein attached to proteins as an intracellular targeting signal).. In Arabidopsis thaliana (Mouse-ear cress), this protein is Ubiquitin carboxyl-terminal hydrolase 3.